The following is a 146-amino-acid chain: MKKLLLVNGPNLNRLGVREVNVYGKGTLATLETDMKHEAEKMGVELECFQSNHEGAIIDRLHEAEDIYEGIILNPGAFTHYSYAIRDAIASISIPVIEVHISNIHQRESFRHESVTAAVCAGQIVGFGFYGYKLALFALMEKLREA.

Tyrosine 23 functions as the Proton acceptor in the catalytic mechanism. Substrate is bound by residues asparagine 74, histidine 80, and aspartate 87. Residue histidine 100 is the Proton donor of the active site. Residues 101–102 (IS) and arginine 111 each bind substrate.

This sequence belongs to the type-II 3-dehydroquinase family. As to quaternary structure, homododecamer.

The catalysed reaction is 3-dehydroquinate = 3-dehydroshikimate + H2O. It participates in metabolic intermediate biosynthesis; chorismate biosynthesis; chorismate from D-erythrose 4-phosphate and phosphoenolpyruvate: step 3/7. In terms of biological role, catalyzes a trans-dehydration via an enolate intermediate. In Bacillus mycoides (strain KBAB4) (Bacillus weihenstephanensis), this protein is 3-dehydroquinate dehydratase.